Consider the following 1170-residue polypeptide: Type I restriction enzyme EcoKI endonuclease subunit (1170 aa).

A coiled-coil region spans residues 143–229 (YHQEVLTLKQ…QERKAYHKEI (87 aa)). The H-T-H motif DNA-binding region spans 431 to 450 (NQWFADNPGMSELGLRYYQE). The Helicase ATP-binding domain occupies 458–639 (KAIVKGQQEI…GEPVYRYTYR (182 aa)). Residue 472 to 478 (ATGTGKT) participates in ATP binding. The DEAH box motif lies at 574–577 (DEAH). Residues 714–879 (ELTNYLDPTG…TLVNEITDSE (166 aa)) form the Helicase C-terminal domain.

This sequence belongs to the HsdR family. The type I restriction/modification system is composed of three polypeptides R, M and S. The restriction enzyme has stoichiometry R(2)M(2)S(1). The methyltransferase is composed of M(2)S(1). In terms of assembly, (Microbial infection) Interacts with Escherichia phage T7 protein Ocr; this interaction leads to the inhibition of the type I bifunctional endonuclease and methyltransferase restriction enzyme R.EcoKI composed of R(2)M(2)S(1). Post-translationally, upon purification after overexpression about one-third has the initiating methionine removed.

The enzyme catalyses Endonucleolytic cleavage of DNA to give random double-stranded fragments with terminal 5'-phosphates, ATP is simultaneously hydrolyzed.. In terms of biological role, the subtype A restriction (R) subunit of a type I restriction enzyme that recognizes 5'-AACN(6)GTGC-3' and cleaves a random distance away. The R subunit is required for both endonuclease and ATPase activities but not for modification. Has endonucleolytic activity that requires Mg(2+), ATP and S-adenosyl-L-methionine (SAM); ATP can be replaced by dATP, no tested molecule could substitute for SAM. Generates double-stranded DNA with no nicks, by cutting one strand then the other within a few seconds. Cleaves only non-methylated DNA, hemi-methylated and fully methylated DNA are not substrates. After locating a non-methylated recognition site, the enzyme complex serves as a molecular motor that translocates DNA in an ATP-dependent manner until a collision occurs that triggers cleavage. This Escherichia coli (strain K12) protein is Type I restriction enzyme EcoKI endonuclease subunit.